A 128-amino-acid polypeptide reads, in one-letter code: Small ribosomal subunit protein uS11 (128 aa).

The protein belongs to the universal ribosomal protein uS11 family. As to quaternary structure, part of the 30S ribosomal subunit. Interacts with proteins S7 and S18. Binds to IF-3.

In terms of biological role, located on the platform of the 30S subunit, it bridges several disparate RNA helices of the 16S rRNA. Forms part of the Shine-Dalgarno cleft in the 70S ribosome. This Wolbachia sp. subsp. Drosophila simulans (strain wRi) protein is Small ribosomal subunit protein uS11.